The primary structure comprises 187 residues: Anterior gradient protein 1 (187 aa).

An N-terminal signal peptide occupies residues 1 to 20 (MQTGLSLVCLVLLCSALGEA).

The protein belongs to the AGR family.

It localises to the secreted. Functionally, probably involved in cement gland formation. This Xenopus tropicalis (Western clawed frog) protein is Anterior gradient protein 1 (ag1).